The sequence spans 522 residues: 2-isopropylmalate synthase (522 aa).

Residues 5–267 (VIIFDTTLRD…ETGINAKEIH (263 aa)) form the Pyruvate carboxyltransferase domain. Residues aspartate 14, histidine 202, histidine 204, and asparagine 238 each contribute to the Mn(2+) site. Residues 392 to 522 (QLRQLVVQSD…MHKNRELGGV (131 aa)) are regulatory domain.

Belongs to the alpha-IPM synthase/homocitrate synthase family. LeuA type 1 subfamily. Homodimer. Mn(2+) is required as a cofactor.

It localises to the cytoplasm. It catalyses the reaction 3-methyl-2-oxobutanoate + acetyl-CoA + H2O = (2S)-2-isopropylmalate + CoA + H(+). It participates in amino-acid biosynthesis; L-leucine biosynthesis; L-leucine from 3-methyl-2-oxobutanoate: step 1/4. Catalyzes the condensation of the acetyl group of acetyl-CoA with 3-methyl-2-oxobutanoate (2-ketoisovalerate) to form 3-carboxy-3-hydroxy-4-methylpentanoate (2-isopropylmalate). The protein is 2-isopropylmalate synthase of Shewanella oneidensis (strain ATCC 700550 / JCM 31522 / CIP 106686 / LMG 19005 / NCIMB 14063 / MR-1).